The chain runs to 312 residues: ADIPOR-like receptor IZH4 (312 aa).

Residues 1–38 (MVSLTTIEQSPVKCETTTEKESNDTRGTDSNENAETKE) form a disordered region. Residues 1 to 64 (MVSLTTIEQS…YKNKSSRNES (64 aa)) lie on the Cytoplasmic side of the membrane. Over residues 16-38 (TTTEKESNDTRGTDSNENAETKE) the composition is skewed to basic and acidic residues. Residues 65–85 (LVALIYLLGSMLSFCLLIFFT) traverse the membrane as a helical segment. Topologically, residues 86-101 (DFYLIPLFPTTTTMTD) are lumenal. A helical membrane pass occupies residues 102-122 (YIVFNFYLLNVFVFCMVHFIY). At 123–141 (HFVKNISLQQHLEHWQKFS) the chain is on the cytoplasmic side. A helical membrane pass occupies residues 142-162 (YLSNINLLISSQITILYYLFY). The Lumenal portion of the chain corresponds to 163–165 (DYV). Residues 166–186 (FFFKIFTLLMNFIGLVAYFFI) traverse the membrane as a helical segment. Over 187-201 (LTDKLISSKRFNKTV) the chain is Cytoplasmic. A helical transmembrane segment spans residues 202-222 (FFISVSVVCCSLPLLTAIITF). Residues 223–231 (DGLENLKER) are Lumenal-facing. The helical transmembrane segment at 232 to 252 (IKVNAITWELVALVAASIIYV) threads the bilayer. Topologically, residues 253–277 (TRFPESLFRRNKKEEGWNHSEYLFH) are cytoplasmic. A helical transmembrane segment spans residues 278–298 (LLISGTAFYHFFILIQSYILM). Topologically, residues 299 to 312 (HSSLNQPELINFKS) are lumenal.

The protein belongs to the ADIPOR family.

It is found in the endoplasmic reticulum membrane. ADIPOR-like receptor involved in zinc metabolism either by altering membrane sterol content or by directly altering cellular zinc levels. The protein is ADIPOR-like receptor IZH4 (IZH4) of Saccharomyces cerevisiae (strain ATCC 204508 / S288c) (Baker's yeast).